Here is a 320-residue protein sequence, read N- to C-terminus: Thymidylate synthase (320 aa).

DUMP-binding positions include Arg-27 and Arg-182–Arg-183. The active-site Nucleophile is Cys-202. DUMP contacts are provided by residues Arg-222–Asp-225, Asn-233, and His-263–Tyr-265. (6R)-5,10-methylene-5,6,7,8-tetrahydrofolate is bound at residue Asp-225. Residue Ala-319 participates in (6R)-5,10-methylene-5,6,7,8-tetrahydrofolate binding.

This sequence belongs to the thymidylate synthase family. Bacterial-type ThyA subfamily. In terms of assembly, homodimer.

Its subcellular location is the cytoplasm. The catalysed reaction is dUMP + (6R)-5,10-methylene-5,6,7,8-tetrahydrofolate = 7,8-dihydrofolate + dTMP. The protein operates within pyrimidine metabolism; dTTP biosynthesis. In terms of biological role, catalyzes the reductive methylation of 2'-deoxyuridine-5'-monophosphate (dUMP) to 2'-deoxythymidine-5'-monophosphate (dTMP) while utilizing 5,10-methylenetetrahydrofolate (mTHF) as the methyl donor and reductant in the reaction, yielding dihydrofolate (DHF) as a by-product. This enzymatic reaction provides an intracellular de novo source of dTMP, an essential precursor for DNA biosynthesis. This is Thymidylate synthase from Limosilactobacillus reuteri (strain DSM 20016) (Lactobacillus reuteri).